A 76-amino-acid polypeptide reads, in one-letter code: cAMP-dependent protein kinase inhibitor alpha (76 aa).

Thr-2 bears the N-acetylthreonine mark. A disordered region spans residues 49 to 76 (KTEGEEDAQRSSTEQSGEAQGEAAKSES).

It belongs to the PKI family.

Its function is as follows. Extremely potent competitive inhibitor of cAMP-dependent protein kinase activity, this protein interacts with the catalytic subunit of the enzyme after the cAMP-induced dissociation of its regulatory chains. The protein is cAMP-dependent protein kinase inhibitor alpha (PKIA) of Homo sapiens (Human).